Consider the following 74-residue polypeptide: Cytochrome b559 subunit alpha (74 aa).

A helical membrane pass occupies residues 22–36 (VIHTVTIPSLFVAGW). Residue His24 coordinates heme.

It belongs to the PsbE/PsbF family. In terms of assembly, heterodimer of an alpha subunit and a beta subunit. PSII is composed of 1 copy each of membrane proteins PsbA, PsbB, PsbC, PsbD, PsbE, PsbF, PsbH, PsbI, PsbJ, PsbK, PsbL, PsbM, PsbT, PsbX, PsbY, PsbZ, Psb30/Ycf12, at least 3 peripheral proteins of the oxygen-evolving complex and a large number of cofactors. It forms dimeric complexes. Heme b serves as cofactor.

The protein resides in the plastid. It localises to the cyanelle thylakoid membrane. Functionally, this b-type cytochrome is tightly associated with the reaction center of photosystem II (PSII). PSII is a light-driven water:plastoquinone oxidoreductase that uses light energy to abstract electrons from H(2)O, generating O(2) and a proton gradient subsequently used for ATP formation. It consists of a core antenna complex that captures photons, and an electron transfer chain that converts photonic excitation into a charge separation. This chain is Cytochrome b559 subunit alpha, found in Cyanophora paradoxa.